A 95-amino-acid chain; its full sequence is Cliotide T1 (95 aa).

Positions 1–30 (GIPCGESCVFIPCITGAIGCSCKSKVCYRN) form a cross-link, cyclopeptide (Gly-Asn). Disulfide bonds link cysteine 4–cysteine 20, cysteine 8–cysteine 22, and cysteine 13–cysteine 27. A propeptide spans 31–95 (HVIAAEAKTM…KDHLKMSITN (65 aa)) (removed in mature form).

Contains 3 disulfide bonds. In terms of processing, this is a cyclic peptide. Expressed in flower, stem, shoot, root, leaf, seed, pod and nodule (at protein level).

Probably participates in a plant defense mechanism. Active against Gram-negative bacteria E.coli ATCC 700926 (MIC=1.1 uM), K.pneumoniae ATTC 13883 (MIC=2.7 uM) and P.aeruginosa ATCC 39018 (MIC=4.7 uM). Has hemolytic and cytotoxic activity. This Clitoria ternatea (Butterfly pea) protein is Cliotide T1.